We begin with the raw amino-acid sequence, 243 residues long: Type III pantothenate kinase (243 aa).

7–14 (DLGNSRFK) is an ATP binding site. Substrate-binding positions include Tyr91 and 98-101 (GVDR). The Proton acceptor role is filled by Asp100. Thr122 contacts ATP. Thr172 is a substrate binding site.

It belongs to the type III pantothenate kinase family. Homodimer. NH4(+) serves as cofactor. It depends on K(+) as a cofactor.

The protein localises to the cytoplasm. The catalysed reaction is (R)-pantothenate + ATP = (R)-4'-phosphopantothenate + ADP + H(+). It functions in the pathway cofactor biosynthesis; coenzyme A biosynthesis; CoA from (R)-pantothenate: step 1/5. In terms of biological role, catalyzes the phosphorylation of pantothenate (Pan), the first step in CoA biosynthesis. This chain is Type III pantothenate kinase, found in Stenotrophomonas maltophilia (strain R551-3).